A 457-amino-acid chain; its full sequence is Oxygen-independent coproporphyrinogen III oxidase (457 aa).

The region spanning 47 to 279 is the Radical SAM core domain; sequence LKNPMPLSLY…EILESLISFL (233 aa). Y56 contributes to the S-adenosyl-L-methionine binding site. C62 and C66 together coordinate [4Fe-4S] cluster. Residue F68 coordinates S-adenosyl-L-methionine. C69 contributes to the [4Fe-4S] cluster binding site. Residues G113, 114–115, E147, Q174, R186, D211, A245, and I331 each bind S-adenosyl-L-methionine; that span reads GT.

It belongs to the anaerobic coproporphyrinogen-III oxidase family. In terms of assembly, monomer. The cofactor is [4Fe-4S] cluster.

Its subcellular location is the cytoplasm. It catalyses the reaction coproporphyrinogen III + 2 S-adenosyl-L-methionine = protoporphyrinogen IX + 2 5'-deoxyadenosine + 2 L-methionine + 2 CO2. The protein operates within porphyrin-containing compound metabolism; protoporphyrin-IX biosynthesis; protoporphyrinogen-IX from coproporphyrinogen-III (AdoMet route): step 1/1. Its function is as follows. Involved in the heme biosynthesis. Catalyzes the anaerobic oxidative decarboxylation of propionate groups of rings A and B of coproporphyrinogen III to yield the vinyl groups in protoporphyrinogen IX. The polypeptide is Oxygen-independent coproporphyrinogen III oxidase (hemN) (Helicobacter pylori (strain J99 / ATCC 700824) (Campylobacter pylori J99)).